Consider the following 444-residue polypeptide: Spermidine/putrescine import ATP-binding protein PotA (444 aa).

The 322-residue stretch at 11–332 folds into the ABC transporter domain; sequence ISLVDVDKEF…PVNKWVANFI (322 aa). 43–50 contacts ATP; that stretch reads GPSGSGKT. The tract at residues 111–201 is insert; that stretch reads RIKKKAEEIP…ESFKKKYLTR (91 aa).

The protein belongs to the ABC transporter superfamily. Spermidine/putrescine importer (TC 3.A.1.11.1) family. As to quaternary structure, the complex is composed of two ATP-binding proteins (PotA), two transmembrane proteins (PotB and PotC) and a solute-binding protein (PotD).

It localises to the cell membrane. The catalysed reaction is ATP + H2O + polyamine-[polyamine-binding protein]Side 1 = ADP + phosphate + polyamineSide 2 + [polyamine-binding protein]Side 1.. In terms of biological role, part of the ABC transporter complex PotABCD involved in spermidine/putrescine import. Responsible for energy coupling to the transport system. In Mesomycoplasma hyopneumoniae (strain 232) (Mycoplasma hyopneumoniae), this protein is Spermidine/putrescine import ATP-binding protein PotA.